Consider the following 418-residue polypeptide: Glutamyl-tRNA reductase (418 aa).

Substrate contacts are provided by residues 49-52 (TCNR), Ser109, 114-116 (EPQ), and Gln120. Cys50 acts as the Nucleophile in catalysis. Residue 189 to 194 (GAGETI) participates in NADP(+) binding.

The protein belongs to the glutamyl-tRNA reductase family. As to quaternary structure, homodimer.

It carries out the reaction (S)-4-amino-5-oxopentanoate + tRNA(Glu) + NADP(+) = L-glutamyl-tRNA(Glu) + NADPH + H(+). The protein operates within porphyrin-containing compound metabolism; protoporphyrin-IX biosynthesis; 5-aminolevulinate from L-glutamyl-tRNA(Glu): step 1/2. Catalyzes the NADPH-dependent reduction of glutamyl-tRNA(Glu) to glutamate 1-semialdehyde (GSA). This Klebsiella pneumoniae (strain 342) protein is Glutamyl-tRNA reductase.